Here is a 208-residue protein sequence, read N- to C-terminus: Holliday junction resolvase RecU (208 aa).

A disordered region spans residues Met-1 to Gly-30. Residues Thr-87, Asp-89, Glu-102, and Gln-121 each contribute to the Mg(2+) site.

This sequence belongs to the RecU family. Mg(2+) is required as a cofactor.

It is found in the cytoplasm. It carries out the reaction Endonucleolytic cleavage at a junction such as a reciprocal single-stranded crossover between two homologous DNA duplexes (Holliday junction).. Functionally, endonuclease that resolves Holliday junction intermediates in genetic recombination. Cleaves mobile four-strand junctions by introducing symmetrical nicks in paired strands. Promotes annealing of linear ssDNA with homologous dsDNA. Required for DNA repair, homologous recombination and chromosome segregation. The chain is Holliday junction resolvase RecU from Staphylococcus saprophyticus subsp. saprophyticus (strain ATCC 15305 / DSM 20229 / NCIMB 8711 / NCTC 7292 / S-41).